The following is a 154-amino-acid chain: Transcriptional repressor NrdR (154 aa).

The disordered stretch occupies residues 1 to 22; it reads MRCPFCAHDDSQVKDSRPTDDG. A zinc finger lies at 3 to 34; it reads CPFCAHDDSQVKDSRPTDDGAAIRRRRQCEGC. Positions 7–22 are enriched in basic and acidic residues; it reads AHDDSQVKDSRPTDDG. Residues 49–139 enclose the ATP-cone domain; that stretch reads MTVVKSDGRR…VYKDFREAKD (91 aa).

This sequence belongs to the NrdR family. Zn(2+) is required as a cofactor.

Negatively regulates transcription of bacterial ribonucleotide reductase nrd genes and operons by binding to NrdR-boxes. In Rhizorhabdus wittichii (strain DSM 6014 / CCUG 31198 / JCM 15750 / NBRC 105917 / EY 4224 / RW1) (Sphingomonas wittichii), this protein is Transcriptional repressor NrdR.